Here is an 82-residue protein sequence, read N- to C-terminus: uncharacterized protein (82 aa).

This is an uncharacterized protein from Rickettsia prowazekii (strain Madrid E).